The following is a 147-amino-acid chain: Endothelial differentiation-related factor 1 homolog (147 aa).

The tract at residues Met-1 to His-69 is disordered. A compositionally biased stretch (basic and acidic residues) spans Arg-33–Lys-42. Over residues Ala-46–Thr-58 the composition is skewed to polar residues. Basic and acidic residues predominate over residues Ala-59–His-69. The HTH cro/C1-type domain maps to Ile-81–Lys-135. The H-T-H motif DNA-binding region spans Gln-92–Cys-111.

The protein localises to the nucleus. Probable transcriptional coactivator. In Xenopus laevis (African clawed frog), this protein is Endothelial differentiation-related factor 1 homolog (edf1).